Reading from the N-terminus, the 351-residue chain is MSVFLRKQCLCLGFLLLHLLNQVSATLRCPSRCPSQCPSISPTCAPGVRSVLDGCSCCPVCARQRGESCSEMRPCDQSSGLYCDRSADPNNETGICMVPEGDNCVFDGVIYRNGEKFEPNCQYHCTCRDGQIGCVPRCQLDVLLPGPDCPAPKKVAVPGECCEKWTCGSEEKGTLGGLALPAYRPEATVGVELSDSSINCIEQTTEWSACSKSCGMGLSTRVTNRNLQCEMVKQTRLCMVRPCEQEPGEATDMKGKKCLRTKKSLKSIHLQFKNCTSLYTYKPRFCGICSDGRCCTPFNTKTIQVEFQCLPGQIIKKPVMVIGTCTCHSNCPQNNEAFLQELELKTSRGEM.

Residues 1–21 (MSVFLRKQCLCLGFLLLHLLN) form the signal peptide. The IGFBP N-terminal domain occupies 25–99 (ATLRCPSRCP…NNETGICMVP (75 aa)). 6 cysteine pairs are disulfide-bonded: Cys-29–Cys-55, Cys-33–Cys-57, Cys-37–Cys-58, Cys-44–Cys-61, Cys-69–Cys-83, and Cys-75–Cys-96. An N-linked (GlcNAc...) asparagine glycan is attached at Asn-91. The region spanning 102-168 (DNCVFDGVIY…GECCEKWTCG (67 aa)) is the VWFC domain. Residues 199 to 244 (NCIEQTTEWSACSKSCGMGLSTRVTNRNLQCEMVKQTRLCMVRPCE) enclose the TSP type-1 domain. The S-palmitoyl cysteine moiety is linked to residue Cys-238. 5 cysteine pairs are disulfide-bonded: Cys-258/Cys-295, Cys-275/Cys-309, Cys-286/Cys-325, Cys-289/Cys-327, and Cys-294/Cys-331. Residues 258 to 332 (CLRTKKSLKS…GTCTCHSNCP (75 aa)) form the CTCK domain. N-linked (GlcNAc...) asparagine glycosylation is present at Asn-274.

It belongs to the CCN family. In terms of assembly, interacts with FBLN1. Interacts (via CTCK domain) with NOTCH1 (via the EGF-like repeat region). Interacts with GJA1/CX43. Interacts with ITGA5:ITGB1, ITGAV:ITGB3 and ITGAV:ITGB5. Interacts with ZDHHC22; the interaction may lead to CCN3 palmitoylation. Post-translationally, may be palmitoylated on Cys-238, which is important for extracellular secretion. Widely expressed. Highly expressed in neurons of dorsal root ganglia and dorsal horn of the spinal cord (at protein level). Expressed in astrocytes (at protein level). In cartilage, dominantly expressed in the chondrocyte territorial matrix.

The protein resides in the secreted. It localises to the cytoplasm. It is found in the cell junction. Its subcellular location is the gap junction. Its function is as follows. Immediate-early protein playing a role in various cellular processes including proliferation, adhesion, migration, differentiation and survival. Acts by binding to integrins or membrane receptors such as NOTCH1. Essential regulator of hematopoietic stem and progenitor cell function. Inhibits myogenic differentiation through the activation of Notch-signaling pathway. Inhibits vascular smooth muscle cells proliferation by increasing expression of cell-cycle regulators such as CDKN2B or CDKN1A independently of TGFB1 signaling. Ligand of integrins ITGAV:ITGB3 and ITGA5:ITGB1, acts directly upon endothelial cells to stimulate pro-angiogenic activities and induces angiogenesis. In endothelial cells, supports cell adhesion, induces directed cell migration (chemotaxis) and promotes cell survival. Also plays a role in cutaneous wound healing acting as integrin receptor ligand. Supports skin fibroblast adhesion through ITGA5:ITGB1 and ITGA6:ITGB1 and induces fibroblast chemotaxis through ITGAV:ITGB5. Seems to enhance bFGF-induced DNA synthesis in fibroblasts. Involved in bone regeneration as a negative regulator. Enhances the articular chondrocytic phenotype, whereas it repressed the one representing endochondral ossification. Impairs pancreatic beta-cell function, inhibits beta-cell proliferation and insulin secretion. Plays a role as negative regulator of endothelial pro-inflammatory activation reducing monocyte adhesion, its anti-inflammatory effects occur secondary to the inhibition of NF-kappaB signaling pathway. Contributes to the control and coordination of inflammatory processes in atherosclerosis. Attenuates inflammatory pain through regulation of IL1B- and TNF-induced MMP9, MMP2 and CCL2 expression. Inhibits MMP9 expression through ITGB1 engagement. Brain osteoanabolic hormone. During lactation, maintains the maternal skeleton and viability of offspring. This chain is CCN family member 3 (Ccn3), found in Rattus norvegicus (Rat).